A 206-amino-acid polypeptide reads, in one-letter code: Small ribosomal subunit protein uS4 (206 aa).

Residues 18 to 46 are disordered; that stretch reads NIWGRPKSPVNRREYGPGQHGQRRKGKIS. In terms of domain architecture, S4 RNA-binding spans 94–154; it reads RRLDAVVYRA…DRSKQMVALI (61 aa).

Belongs to the universal ribosomal protein uS4 family. In terms of assembly, part of the 30S ribosomal subunit. Contacts protein S5. The interaction surface between S4 and S5 is involved in control of translational fidelity.

Its function is as follows. One of the primary rRNA binding proteins, it binds directly to 16S rRNA where it nucleates assembly of the body of the 30S subunit. Functionally, with S5 and S12 plays an important role in translational accuracy. This is Small ribosomal subunit protein uS4 from Roseobacter denitrificans (strain ATCC 33942 / OCh 114) (Erythrobacter sp. (strain OCh 114)).